The chain runs to 427 residues: Enolase (427 aa).

Glutamine 163 serves as a coordination point for (2R)-2-phosphoglycerate. Glutamate 205 acts as the Proton donor in catalysis. Mg(2+) is bound by residues aspartate 242, glutamate 285, and aspartate 312. (2R)-2-phosphoglycerate contacts are provided by lysine 337, arginine 366, serine 367, and lysine 388. Lysine 337 (proton acceptor) is an active-site residue.

It belongs to the enolase family. It depends on Mg(2+) as a cofactor.

The protein localises to the cytoplasm. It is found in the secreted. It localises to the cell surface. The enzyme catalyses (2R)-2-phosphoglycerate = phosphoenolpyruvate + H2O. Its pathway is carbohydrate degradation; glycolysis; pyruvate from D-glyceraldehyde 3-phosphate: step 4/5. Its function is as follows. Catalyzes the reversible conversion of 2-phosphoglycerate (2-PG) into phosphoenolpyruvate (PEP). It is essential for the degradation of carbohydrates via glycolysis. This is Enolase from Rhodopseudomonas palustris (strain TIE-1).